We begin with the raw amino-acid sequence, 864 residues long: Structure-specific endonuclease subunit SLX4 (864 aa).

The segment covering 35-54 (SPLSLPSPTSLLDFLSTSTS) has biased composition (low complexity). 7 disordered regions span residues 35-72 (SPLS…GKEV), 89-113 (VVSG…PGNA), 160-193 (KANQ…HIND), 288-318 (GLSD…NPPK), 348-382 (LSDE…EKKN), 413-432 (ANGH…HISN), and 625-771 (KTSN…ETLP). Residues 58 to 72 (ARSDTDGDKTQGKEV) show a composition bias toward basic and acidic residues. Polar residues-rich tracts occupy residues 160–169 (KANQTVSLQP) and 289–306 (LSDS…SATS). Over residues 307–317 (KPRRVKAKNPP) the composition is skewed to basic residues. Over residues 659–668 (SIPQTATTQV) the composition is skewed to polar residues. The segment covering 683–695 (VPVPSRRSTSTSK) has biased composition (low complexity). Positions 743–771 (PESFNLPTTPLTIRSGKIPSTGTASETLP) are enriched in polar residues.

It belongs to the SLX4 family. Forms a heterodimer with SLX1. In terms of processing, phosphorylated in response to DNA damage.

The protein resides in the nucleus. Regulatory subunit of the SLX1-SLX4 structure-specific endonuclease that resolves DNA secondary structures generated during DNA repair and recombination. Has endonuclease activity towards branched DNA substrates, introducing single-strand cuts in duplex DNA close to junctions with ss-DNA. The protein is Structure-specific endonuclease subunit SLX4 of Paracoccidioides brasiliensis (strain Pb03).